A 468-amino-acid chain; its full sequence is ATP synthase subunit beta (468 aa).

G148–T155 serves as a coordination point for ATP.

The protein belongs to the ATPase alpha/beta chains family. F-type ATPases have 2 components, CF(1) - the catalytic core - and CF(0) - the membrane proton channel. CF(1) has five subunits: alpha(3), beta(3), gamma(1), delta(1), epsilon(1). CF(0) has three main subunits: a(1), b(2) and c(9-12). The alpha and beta chains form an alternating ring which encloses part of the gamma chain. CF(1) is attached to CF(0) by a central stalk formed by the gamma and epsilon chains, while a peripheral stalk is formed by the delta and b chains.

It localises to the cell inner membrane. The enzyme catalyses ATP + H2O + 4 H(+)(in) = ADP + phosphate + 5 H(+)(out). In terms of biological role, produces ATP from ADP in the presence of a proton gradient across the membrane. The catalytic sites are hosted primarily by the beta subunits. The polypeptide is ATP synthase subunit beta (Xanthomonas campestris pv. campestris (strain 8004)).